The sequence spans 500 residues: Cytochrome P450 monooxygenase acrD (500 aa).

A helical transmembrane segment spans residues 13 to 32 (PYLSGTNLVWTLLLVGYIIP). N-linked (GlcNAc...) asparagine glycosylation is found at Asn210 and Asn414. Cys447 is a binding site for heme.

The protein belongs to the cytochrome P450 family. The cofactor is heme.

It localises to the membrane. It functions in the pathway secondary metabolite biosynthesis. In terms of biological role, cytochrome P450 monooxygenase; part of the cluster that mediates the biosynthesis of acurin A, a highly reduced polyketide coupled to a serine via a peptide bond. The activities of the highly reducing polyketide synthase acrA and the nonribosomal peptide synthetase acrB are collectively responsible for the synthesis of the acurin A core structure with a heptaketide backbone produced by acrA covalently fused to a L-serine by acrB. After the formation of the PK-NRP hybrid product, it is detached from acrB by reductive release to set up the formation of the lactam ring by aldol condensation. The hydrolyase acrC then catalyzes water loss to generate a double bond in the ring. This double bond is probably reduced, which is followed by three oxidations at C-22 to generate the carboxylic acid moiety, involving probably the FAD-binding monooxygenase acrE and the cytochrome P450 monooxygenases acrD and acrF. Finally, a last methylation step performed by the O-methyltransferase acrG leads to the production of acurin A. The protein is Cytochrome P450 monooxygenase acrD of Aspergillus aculeatus (strain ATCC 16872 / CBS 172.66 / WB 5094).